A 357-amino-acid polypeptide reads, in one-letter code: Alanine racemase (357 aa).

The active-site Proton acceptor; specific for D-alanine is Lys-33. Position 33 is an N6-(pyridoxal phosphate)lysine (Lys-33). Arg-129 is a binding site for substrate. Tyr-253 serves as the catalytic Proton acceptor; specific for L-alanine. Met-301 provides a ligand contact to substrate.

Belongs to the alanine racemase family. Pyridoxal 5'-phosphate serves as cofactor.

The enzyme catalyses L-alanine = D-alanine. It functions in the pathway amino-acid biosynthesis; D-alanine biosynthesis; D-alanine from L-alanine: step 1/1. Functionally, catalyzes the interconversion of L-alanine and D-alanine. May also act on other amino acids. This is Alanine racemase (alr) from Pseudomonas syringae pv. syringae (strain B728a).